A 363-amino-acid polypeptide reads, in one-letter code: Dual-specificity RNA methyltransferase RlmN (363 aa).

Catalysis depends on glutamate 102, which acts as the Proton acceptor. In terms of domain architecture, Radical SAM core spans 108–349; that stretch reads EKKRATLCVS…KNRGQDIGAA (242 aa). Cysteine 115 and cysteine 350 are disulfide-bonded. Cysteine 122, cysteine 126, and cysteine 129 together coordinate [4Fe-4S] cluster. S-adenosyl-L-methionine is bound by residues 174 to 175, serine 206, 228 to 230, and asparagine 307; these read GE and SLH. Cysteine 350 serves as the catalytic S-methylcysteine intermediate.

It belongs to the radical SAM superfamily. RlmN family. [4Fe-4S] cluster is required as a cofactor.

The protein resides in the cytoplasm. It catalyses the reaction adenosine(2503) in 23S rRNA + 2 reduced [2Fe-2S]-[ferredoxin] + 2 S-adenosyl-L-methionine = 2-methyladenosine(2503) in 23S rRNA + 5'-deoxyadenosine + L-methionine + 2 oxidized [2Fe-2S]-[ferredoxin] + S-adenosyl-L-homocysteine. It carries out the reaction adenosine(37) in tRNA + 2 reduced [2Fe-2S]-[ferredoxin] + 2 S-adenosyl-L-methionine = 2-methyladenosine(37) in tRNA + 5'-deoxyadenosine + L-methionine + 2 oxidized [2Fe-2S]-[ferredoxin] + S-adenosyl-L-homocysteine. In terms of biological role, specifically methylates position 2 of adenine 2503 in 23S rRNA and position 2 of adenine 37 in tRNAs. m2A2503 modification seems to play a crucial role in the proofreading step occurring at the peptidyl transferase center and thus would serve to optimize ribosomal fidelity. In Buchnera aphidicola subsp. Schizaphis graminum (strain Sg), this protein is Dual-specificity RNA methyltransferase RlmN.